Here is a 106-residue protein sequence, read N- to C-terminus: uncharacterized protein (106 aa).

The protein belongs to the SUI1 family.

This is an uncharacterized protein from Haemophilus influenzae (strain ATCC 51907 / DSM 11121 / KW20 / Rd).